The chain runs to 162 residues: General odorant-binding protein 2 (162 aa).

The signal sequence occupies residues 1-18; it reads MTSKSCLLLVAMVTLTTS. 3 cysteine pairs are disulfide-bonded: Cys-40–Cys-75, Cys-71–Cys-129, and Cys-118–Cys-138.

Belongs to the PBP/GOBP family. In terms of tissue distribution, antenna.

Present in the aqueous fluid surrounding olfactory sensory dendrites and are thought to aid in the capture and transport of hydrophobic odorants into and through this fluid. The polypeptide is General odorant-binding protein 2 (Heliothis virescens (Tobacco budworm moth)).